A 449-amino-acid polypeptide reads, in one-letter code: Glucose-6-phosphate isomerase (449 aa).

The Proton donor role is filled by glutamate 291. Active-site residues include histidine 312 and lysine 426.

This sequence belongs to the GPI family.

Its subcellular location is the cytoplasm. It catalyses the reaction alpha-D-glucose 6-phosphate = beta-D-fructose 6-phosphate. Its pathway is carbohydrate biosynthesis; gluconeogenesis. It functions in the pathway carbohydrate degradation; glycolysis; D-glyceraldehyde 3-phosphate and glycerone phosphate from D-glucose: step 2/4. Functionally, catalyzes the reversible isomerization of glucose-6-phosphate to fructose-6-phosphate. The sequence is that of Glucose-6-phosphate isomerase from Streptococcus pyogenes serotype M5 (strain Manfredo).